An 86-amino-acid chain; its full sequence is Weak neurotoxin 5 (86 aa).

An N-terminal signal peptide occupies residues 1–21 (MKTLLLTLVVVTIVCLDLGYT). 5 cysteine pairs are disulfide-bonded: cysteine 24-cysteine 45, cysteine 27-cysteine 32, cysteine 38-cysteine 63, cysteine 67-cysteine 78, and cysteine 79-cysteine 84.

This sequence belongs to the three-finger toxin family. Ancestral subfamily. Orphan group II sub-subfamily. In terms of tissue distribution, expressed by the venom gland.

Its subcellular location is the secreted. Binds with low affinity to muscular and very low affinity to neuronal (alpha-7/CHRNA7) nicotinic acetylcholine receptor (nAChR). The polypeptide is Weak neurotoxin 5 (Naja sputatrix (Malayan spitting cobra)).